Consider the following 82-residue polypeptide: Protein WFDC11 (82 aa).

Positions 1–21 (MKPSWFPCLVFLCMLLLSALG) are cleaved as a signal peptide.

It localises to the secreted. In Mus musculus (Mouse), this protein is Protein WFDC11 (Wfdc11).